The chain runs to 137 residues: Protein E6 (137 aa).

2 zinc fingers span residues 17–53 and 90–127; these read CLWCREPLTEVDAFRCMVKDFHVVIREGCRYGACTIC and CCYCGGKLTKNEKHRHVLFNEPFCKTRANIIRGRCYDC.

Belongs to the papillomaviridae E6 protein family. Forms homodimers. Interacts with ubiquitin-protein ligase UBE3A/E6-AP; this interaction stimulates UBE3A ubiquitin activity. Interacts with host BAK1. Interacts with human FBLN1.

The protein localises to the host cytoplasm. It is found in the host nucleus. Functionally, plays a major role in the induction and maintenance of cellular transformation. E6 associates with host UBE3A/E6-AP ubiquitin-protein ligase and modulates its activity. Protects host keratinocytes from apoptosis by mediating the degradation of host BAK1. May also inhibit host immune response. This is Protein E6 from Bos taurus (Bovine).